A 347-amino-acid chain; its full sequence is NADH-ubiquinone oxidoreductase chain 2 (347 aa).

Helical transmembrane passes span 1–21 (MNPL…LIVM), 25–45 (HWFM…PLLT), 67–87 (SMLL…WSIM), 111–131 (FHFW…LILL), 144–164 (MIMP…SIAI), 178–198 (IMAY…AYNP), 201–221 (TLLN…LLMI), 237–257 (LPLI…LPPL), 274–294 (SSII…YFYT), and 326–346 (LPLM…MPIL).

It belongs to the complex I subunit 2 family. As to quaternary structure, core subunit of respiratory chain NADH dehydrogenase (Complex I) which is composed of 45 different subunits. Interacts with TMEM242.

The protein resides in the mitochondrion inner membrane. It catalyses the reaction a ubiquinone + NADH + 5 H(+)(in) = a ubiquinol + NAD(+) + 4 H(+)(out). Core subunit of the mitochondrial membrane respiratory chain NADH dehydrogenase (Complex I) which catalyzes electron transfer from NADH through the respiratory chain, using ubiquinone as an electron acceptor. Essential for the catalytic activity and assembly of complex I. The chain is NADH-ubiquinone oxidoreductase chain 2 from Myotis simus (Velvety myotis).